The sequence spans 140 residues: Lymphocyte antigen 6H (140 aa).

The signal sequence occupies residues 1–25; it reads MLPAAMKGLGLALLAVLLCSAPAHG. Residues 26–91 form the UPAR/Ly6 domain; that stretch reads LWCQDCTLTT…RHFFSDYLMG (66 aa). Disulfide bonds link Cys-28/Cys-52, Cys-31/Cys-40, Cys-45/Cys-73, and Cys-77/Cys-104. Asn-36 is a glycosylation site (N-linked (GlcNAc...) asparagine). Gly-115 is lipidated: GPI-anchor amidated glycine. Residues 116-140 constitute a propeptide, removed in mature form; that stretch reads AGHSPWALAGGLLLSLGPALLWAGP.

As to quaternary structure, interacts with CHRNA4 and CHRNA7.

The protein resides in the cell membrane. In terms of biological role, believed to act as a modulator of nicotinic acetylcholine receptors (nAChRs) activity. In vitro inhibits alpha-3:beta-4-containing nAChRs maximum response. May play a role in the intracellular trafficking of alpha-7-containing nAChRs and may inhibit their expression at the cell surface. Seems to inhibit alpha-7/CHRNA7 signaling in hippocampal neurons. This chain is Lymphocyte antigen 6H (LY6H), found in Macaca fascicularis (Crab-eating macaque).